The following is a 514-amino-acid chain: Glutamate--cysteine ligase (514 aa).

The protein belongs to the glutamate--cysteine ligase type 1 family. Type 1 subfamily.

The catalysed reaction is L-cysteine + L-glutamate + ATP = gamma-L-glutamyl-L-cysteine + ADP + phosphate + H(+). It participates in sulfur metabolism; glutathione biosynthesis; glutathione from L-cysteine and L-glutamate: step 1/2. This is Glutamate--cysteine ligase from Enterobacter sp. (strain 638).